Reading from the N-terminus, the 714-residue chain is Polyribonucleotide nucleotidyltransferase (714 aa).

Residues D487 and D493 each coordinate Mg(2+). One can recognise a KH domain in the interval 554–613; that stretch reads PRIETLKIPTDKIREVIGTGGKVIREIVEKTGAKINIEDDGTVKVASSDGNSIKAAIAWI. An S1 motif domain is found at 623 to 691; that stretch reads GQIYEGTVVK…DRGKVRLSMR (69 aa).

This sequence belongs to the polyribonucleotide nucleotidyltransferase family. Mg(2+) is required as a cofactor.

The protein localises to the cytoplasm. The enzyme catalyses RNA(n+1) + phosphate = RNA(n) + a ribonucleoside 5'-diphosphate. Its function is as follows. Involved in mRNA degradation. Catalyzes the phosphorolysis of single-stranded polyribonucleotides processively in the 3'- to 5'-direction. The sequence is that of Polyribonucleotide nucleotidyltransferase from Methylocella silvestris (strain DSM 15510 / CIP 108128 / LMG 27833 / NCIMB 13906 / BL2).